The sequence spans 618 residues: Chaperone protein HscA homolog (618 aa).

The protein belongs to the heat shock protein 70 family.

Chaperone involved in the maturation of iron-sulfur cluster-containing proteins. Has a low intrinsic ATPase activity which is markedly stimulated by HscB. This chain is Chaperone protein HscA homolog, found in Methylibium petroleiphilum (strain ATCC BAA-1232 / LMG 22953 / PM1).